The following is a 258-amino-acid chain: 3-deoxy-manno-octulosonate cytidylyltransferase (258 aa).

The protein belongs to the KdsB family.

The protein resides in the cytoplasm. The catalysed reaction is 3-deoxy-alpha-D-manno-oct-2-ulosonate + CTP = CMP-3-deoxy-beta-D-manno-octulosonate + diphosphate. The protein operates within nucleotide-sugar biosynthesis; CMP-3-deoxy-D-manno-octulosonate biosynthesis; CMP-3-deoxy-D-manno-octulosonate from 3-deoxy-D-manno-octulosonate and CTP: step 1/1. It functions in the pathway bacterial outer membrane biogenesis; lipopolysaccharide biosynthesis. Activates KDO (a required 8-carbon sugar) for incorporation into bacterial lipopolysaccharide in Gram-negative bacteria. The polypeptide is 3-deoxy-manno-octulosonate cytidylyltransferase (Pasteurella multocida (strain Pm70)).